The chain runs to 283 residues: Nudix hydrolase 6 (283 aa).

In terms of domain architecture, Nudix hydrolase spans 101–233 (SHRIGVGAFV…KKELFRFMAN (133 aa)). Residues 139 to 160 (GVVKEGENIWEGALREVEEETG) carry the Nudix box motif. A divalent metal cation is bound by residues Glu154, Glu158, and Glu204.

The protein belongs to the Nudix hydrolase family. Requires Mg(2+) as cofactor. The cofactor is Mn(2+). Expressed in stems and leaves. Weakly or not expressed in roots.

It catalyses the reaction ADP-D-ribose + H2O = D-ribose 5-phosphate + AMP + 2 H(+). The enzyme catalyses NAD(+) + H2O = beta-nicotinamide D-ribonucleotide + AMP + 2 H(+). The catalysed reaction is NADH + H2O = reduced beta-nicotinamide D-ribonucleotide + AMP + 2 H(+). Functionally, probably mediates the hydrolysis of some nucleoside diphosphate derivatives. In vitro, it can use both NADH and ADP-ribose as substrates; however the relevance of such substrates in vivo is unclear. In Arabidopsis thaliana (Mouse-ear cress), this protein is Nudix hydrolase 6.